Here is a 1627-residue protein sequence, read N- to C-terminus: MALFRKFFLKKTPDRLLEISERVYVFDCCFSTDSMGEDEYRDYLSGIVAQLQDYFPDASFMVSNFWSGDKRSRISDILSEYDMTVMDYPQQYEGCPLLQLEMIHHFLKSCENWLSVEGQHNMLLMHCERGGWPVLAFMLAGLLLYRKTYTGEQKTLEMVYKQARRDFIQQFFPLNPQSSHMRYLHYITRQGSGPEKPPISRPLILDSIVLHVVPRFDAEGGCRPYLRVHGQDSSSSNKSAKVLYEMPKTKKHLQRYGQAEVPVKVGAFCRVQGDVVLECIHIGDNLDHEEIMFRVMFNTAFIQSNILGLNRDDIDVSWNSNNQFPRDFRAEVVFSDPGSFKPAAATVEEVDDDGDETDVASVDTGEEFYEAEEDWHDARRDPETQSTDGRTSIGDAELDGGVSREDSGSLEKHRADEDVKIVISQNLGCMSDRPVSAPAEILGNPGGLQQACENEEMPKLSNRSDQDDNAVQDIQVVAASVDSEGHKFGSICQKEDMKGVIAQTLVTAIDPSCSDEVQCQPDESAKILKYPNLDYTGFSSPRTLSSVDEDTRLGTIPNVALQNADVKIITESTVIVDNELVIYEEKTIVDNGNLTQEVKNVVNEESTTPKLDRSVIESVDSQDNKNHKMEVAKAADTTDSKMEQTKLKSGLEDAISLKKTTVQGSIVVLPATEIATKIKTKREESGGRRDVGISLPQSKIEARAKSPRISSDRRQIPDKVVPSKKMPVDHAPEAVLLEEKLGNSDQSQEQPKAVKPKTVRRWISPNKESETTSVHRPSHPPSRYDSSPAALAIHSMHTNNKFNVGKDAPLVSSGAQAVPKIQAAPPPPPPPPPPYASSSSLSMHMGSATKQQPPPPPPPPPLPPPPPPPASSGLSSIPPPPPPPPLMSFGAQTRTFVPPPPPPPPPPRSGVGGNTPPAPPPPPLRSTVPAISPPPPPPPPPLKPSSGAPCPPPPPPPPPPPPPSAPSSRAFSSAPPPPPPPPLLRSVPPPPPPPPISHSNAPPPPPLPAARFNAPPPPPPPPTTHFNAPPPPPPPPITRSGAPPSPPPPPSPPPPPPPPGARPGPPPPPPPPGARPGPPPPPPPPGGRPSAPPLPPPGGRASAPPPPPPPSTRLGAPPPPPPPGAGGRAPPPPPAPGGRLGGPPPPPPPGGRAPPPPRGPGAPPPPGGNPSSLIGRGRGVVRASGSGFGAAAARKSTLKPLHWIKVTRALQGSLWEELQRNDDSQSVSEFDLSELESLFPAAVPKPNDSSKSDSRRKSLGSKPEKVHLIELRRANNTEIMLTKVKMPLPDLVSAALALDQSTLDVDQVENLIKFCPTKEEMELLKNYTGDKENLGKCEQFFLELMKVPRMESKLRVFSFKIQFGSQVADLRKSLNTIDSSCDEIRSSLKLKEIMKKILLLGNTLNQGTARGAAVGFRLDSLLKLTDTRATNNKMTLMHYLCKVLAAKSSQLLDFYMDLVSLEATSKIQLKMLAEEMQAVSKGLEKVQLEYNASESDGPVSEIFREKLKEFTDNAGADVQSLSSLFSEVGKKADALIKYFGEDPVRCPFEQVISTLLTFVTMFRKAHEENRKQAELDKKRAEKEAEAEKSKAQLASKNDSKPSNPSRQVKQTPDTKTRAASRRGKDVG.

The 190-residue stretch at 5 to 194 folds into the Phosphatase tensin-type domain; that stretch reads RKFFLKKTPD…HYITRQGSGP (190 aa). The Phosphocysteine intermediate role is filled by Cys127. Positions 200-337 constitute a C2 tensin-type domain; it reads SRPLILDSIV…FRAEVVFSDP (138 aa). Disordered regions lie at residues 370-413, 680-787, 801-1181, 1241-1261, and 1571-1627; these read EAEE…LEKH, TKRE…YDSS, KFNV…RGVV, AAVP…SLGS, and KQAE…KDVG. 4 stretches are compositionally biased toward basic and acidic residues: residues 402–413, 681–691, 700–717, and 726–742; these read VSREDSGSLEKH, KREESGGRRDV, IEAR…RQIP, and MPVD…EKLG. Composition is skewed to pro residues over residues 824–835, 852–870, 877–886, 897–908, 931–965, and 974–1168; these read APPPPPPPPPPY, QPPP…PPPA, IPPPPPPPPL, VPPPPPPPPPPR, ISPP…PPSA, and APPP…PPGG. Positions 1188-1588 constitute an FH2 domain; the sequence is FGAAAARKST…RAEKEAEAEK (401 aa). 2 stretches are compositionally biased toward basic and acidic residues: residues 1248-1261 and 1571-1590; these read DSSK…SLGS and KQAE…EKSK. The segment covering 1600–1611 has biased composition (polar residues); that stretch reads KPSNPSRQVKQT. Positions 1612–1627 are enriched in basic and acidic residues; the sequence is PDTKTRAASRRGKDVG.

It belongs to the formin-like family. Class-II subfamily.

This is Formin-like protein 5 (FH5) from Oryza sativa subsp. japonica (Rice).